A 181-amino-acid chain; its full sequence is Inner membrane-spanning protein YciB (181 aa).

Transmembrane regions (helical) follow at residues 10–30 (LVIFFAVYKFFDIYIASGALI), 50–70 (MHLITFVMVTVFGSLTLILHD), 72–92 (SFIKWKVTIVYALFAIALGVS), 118–138 (VTWYWVSFFVVCGLVNIYVAF), and 148–168 (FKVFGLTALTLINTVLTVVYL).

The protein belongs to the YciB family.

The protein localises to the cell inner membrane. Functionally, plays a role in cell envelope biogenesis, maintenance of cell envelope integrity and membrane homeostasis. This Shewanella pealeana (strain ATCC 700345 / ANG-SQ1) protein is Inner membrane-spanning protein YciB.